Reading from the N-terminus, the 125-residue chain is Small ribosomal subunit protein uS13 (125 aa).

This sequence belongs to the universal ribosomal protein uS13 family. Part of the 30S ribosomal subunit. Forms a loose heterodimer with protein S19. Forms two bridges to the 50S subunit in the 70S ribosome.

In terms of biological role, located at the top of the head of the 30S subunit, it contacts several helices of the 16S rRNA. In the 70S ribosome it contacts the 23S rRNA (bridge B1a) and protein L5 of the 50S subunit (bridge B1b), connecting the 2 subunits; these bridges are implicated in subunit movement. Contacts the tRNAs in the A and P-sites. The protein is Small ribosomal subunit protein uS13 of Rickettsia typhi (strain ATCC VR-144 / Wilmington).